We begin with the raw amino-acid sequence, 394 residues long: Galactose-3-O-sulfotransferase 2 (394 aa).

Residues 1–8 (MWGSQHRS) are Cytoplasmic-facing. The chain crosses the membrane as a helical; Signal-anchor for type II membrane protein span at residues 9-29 (FQVALWFLVLAVFLLVGFLHV). Residues 30-394 (DFRLLIPDKV…TPKDIPFLKK (365 aa)) are Lumenal-facing. 4 N-linked (GlcNAc...) asparagine glycosylation sites follow: Asn-72, Asn-176, Asn-284, and Asn-326.

Belongs to the galactose-3-O-sulfotransferase family.

It localises to the golgi apparatus. It is found in the golgi stack membrane. It functions in the pathway protein modification; carbohydrate sulfation. With respect to regulation, strongly inhibited by Cu(2+) and Zn(2+). Functionally, transfers a sulfate group to the hydroxyl group at C3 of non-reducing beta-galactosyl residues. Acts both on type 1 (Gal-beta-1,3-GlcNAc) and type 2 (Gal-beta-1,4-GlcNAc) chains with similar efficiency. This chain is Galactose-3-O-sulfotransferase 2 (Gal3st2), found in Mus musculus (Mouse).